The chain runs to 431 residues: Signal recognition particle 54 kDa protein (431 aa).

GTP is bound by residues 105–112 (GVEGSGKT), 185–189 (DTAGR), and 243–246 (TKMD).

This sequence belongs to the GTP-binding SRP family. SRP54 subfamily. Part of the signal recognition particle protein translocation system, which is composed of SRP and FtsY. Archaeal SRP consists of a 7S RNA molecule of 300 nucleotides and two protein subunits: SRP54 and SRP19.

It localises to the cytoplasm. It carries out the reaction GTP + H2O = GDP + phosphate + H(+). In terms of biological role, involved in targeting and insertion of nascent membrane proteins into the cytoplasmic membrane. Binds to the hydrophobic signal sequence of the ribosome-nascent chain (RNC) as it emerges from the ribosomes. The SRP-RNC complex is then targeted to the cytoplasmic membrane where it interacts with the SRP receptor FtsY. This Pyrobaculum calidifontis (strain DSM 21063 / JCM 11548 / VA1) protein is Signal recognition particle 54 kDa protein.